Here is a 116-residue protein sequence, read N- to C-terminus: POU domain, class 4, transcription factor 1 (116 aa).

The region spanning 1-54 (VTQADVGSALANLKIPGVGSLSQSTICRFESLTLSHNNMIALKPILQAWLEEAE) is the POU-specific domain. Residues 56-79 (AQREKMNKPELFNGGEKKRKRTSI) are disordered. Residues 72 to 116 (KKRKRTSIAAPEKRSLEAYFAVQPRPSSEKIAAIAEKLDLKKNVV) constitute a DNA-binding region (homeobox).

This sequence belongs to the POU transcription factor family. Class-4 subfamily.

It localises to the nucleus. The protein resides in the cytoplasm. Multifunctional transcription factor with different regions mediating its different effects. Acts by binding (via its C-terminal domain) to sequences related to the consensus octamer motif 5'-ATGCAAAT-3' in the regulatory regions of its target genes. Regulates the expression of specific genes involved in differentiation and survival within a subset of neuronal lineages. It has been shown that activation of some of these genes requires its N-terminal domain, maybe through a neuronal-specific cofactor. The protein is POU domain, class 4, transcription factor 1 (POU4F1) of Gallus gallus (Chicken).